Consider the following 442-residue polypeptide: D-serine dehydratase (442 aa).

Position 118 is an N6-(pyridoxal phosphate)lysine (Lys118).

It belongs to the serine/threonine dehydratase family. DsdA subfamily. Monomer. Pyridoxal 5'-phosphate serves as cofactor.

The catalysed reaction is D-serine = pyruvate + NH4(+). The sequence is that of D-serine dehydratase from Shigella flexneri.